The sequence spans 261 residues: ATP synthase subunit a (261 aa).

6 helical membrane passes run 45–65 (ITNVTMWMAIAVLVIAAILVL), 107–127 (VMTLFLFVLCGNVLGLLPLSF), 133–153 (MAVTVPLALMVFVGVTALGFM), 162–182 (MFWVTSAPLAIRPVLAVIEVI), 209–229 (IAGFASIAVVSPVVVGAVTAI), and 232–252 (LELLVAVVQAYVFTILTCVYL).

The protein belongs to the ATPase A chain family. In terms of assembly, F-type ATPases have 2 components, CF(1) - the catalytic core - and CF(0) - the membrane proton channel. CF(1) has five subunits: alpha(3), beta(3), gamma(1), delta(1), epsilon(1). CF(0) has four main subunits: a, b, b' and c.

Its subcellular location is the cell inner membrane. In terms of biological role, key component of the proton channel; it plays a direct role in the translocation of protons across the membrane. The protein is ATP synthase subunit a of Cereibacter sphaeroides (strain ATCC 17025 / ATH 2.4.3) (Rhodobacter sphaeroides).